A 298-amino-acid polypeptide reads, in one-letter code: Acetyl-coenzyme A carboxylase carboxyl transferase subunit beta (298 aa).

The region spanning Val25 to Ala295 is the CoA carboxyltransferase N-terminal domain. 4 residues coordinate Zn(2+): Cys29, Cys32, Cys48, and Cys51. The C4-type zinc finger occupies Cys29–Cys51.

This sequence belongs to the AccD/PCCB family. Acetyl-CoA carboxylase is a heterohexamer composed of biotin carboxyl carrier protein (AccB), biotin carboxylase (AccC) and two subunits each of ACCase subunit alpha (AccA) and ACCase subunit beta (AccD). Zn(2+) is required as a cofactor.

The protein localises to the cytoplasm. It carries out the reaction N(6)-carboxybiotinyl-L-lysyl-[protein] + acetyl-CoA = N(6)-biotinyl-L-lysyl-[protein] + malonyl-CoA. Its pathway is lipid metabolism; malonyl-CoA biosynthesis; malonyl-CoA from acetyl-CoA: step 1/1. Functionally, component of the acetyl coenzyme A carboxylase (ACC) complex. Biotin carboxylase (BC) catalyzes the carboxylation of biotin on its carrier protein (BCCP) and then the CO(2) group is transferred by the transcarboxylase to acetyl-CoA to form malonyl-CoA. The sequence is that of Acetyl-coenzyme A carboxylase carboxyl transferase subunit beta from Herpetosiphon aurantiacus (strain ATCC 23779 / DSM 785 / 114-95).